The sequence spans 248 residues: Tryptophan synthase alpha chain (248 aa).

Residues E36 and D47 each act as proton acceptor in the active site.

This sequence belongs to the TrpA family. As to quaternary structure, tetramer of two alpha and two beta chains.

The catalysed reaction is (1S,2R)-1-C-(indol-3-yl)glycerol 3-phosphate + L-serine = D-glyceraldehyde 3-phosphate + L-tryptophan + H2O. It participates in amino-acid biosynthesis; L-tryptophan biosynthesis; L-tryptophan from chorismate: step 5/5. The alpha subunit is responsible for the aldol cleavage of indoleglycerol phosphate to indole and glyceraldehyde 3-phosphate. The protein is Tryptophan synthase alpha chain of Archaeoglobus fulgidus (strain ATCC 49558 / DSM 4304 / JCM 9628 / NBRC 100126 / VC-16).